The following is a 446-amino-acid chain: tRNA-2-methylthio-N(6)-dimethylallyladenosine synthase (446 aa).

One can recognise an MTTase N-terminal domain in the interval 3-120; sequence KKLFIETHGC…LPEMIDAARS (118 aa). The [4Fe-4S] cluster site is built by Cys12, Cys49, Cys83, Cys157, Cys161, and Cys164. Positions 143-375 constitute a Radical SAM core domain; sequence RVDGPTAFVS…QGRIHQQGYE (233 aa). A TRAM domain is found at 378–442; that stretch reads RRMVGSTQRI…PHSLRGTLIE (65 aa).

This sequence belongs to the methylthiotransferase family. MiaB subfamily. Monomer. The cofactor is [4Fe-4S] cluster.

It localises to the cytoplasm. It catalyses the reaction N(6)-dimethylallyladenosine(37) in tRNA + (sulfur carrier)-SH + AH2 + 2 S-adenosyl-L-methionine = 2-methylsulfanyl-N(6)-dimethylallyladenosine(37) in tRNA + (sulfur carrier)-H + 5'-deoxyadenosine + L-methionine + A + S-adenosyl-L-homocysteine + 2 H(+). Catalyzes the methylthiolation of N6-(dimethylallyl)adenosine (i(6)A), leading to the formation of 2-methylthio-N6-(dimethylallyl)adenosine (ms(2)i(6)A) at position 37 in tRNAs that read codons beginning with uridine. The protein is tRNA-2-methylthio-N(6)-dimethylallyladenosine synthase of Pseudomonas paraeruginosa (strain DSM 24068 / PA7) (Pseudomonas aeruginosa (strain PA7)).